The following is a 511-amino-acid chain: MSATIARAEEQQNGSTVELKDDTVIVVLGASGDLAKKKTFPALFGLFRNKFLPKGIKIVGYARTQMDHNEYLKRVRSYIKTPTKEIEEQLNSFCELCTYISGQYDQDDSFKNLAKHLEEIEKNQKEQNRVFYMALPPSVFITVSEQLKRNCYPKNGVARIIVEKPFGKDLQSSRDLQKALEPNWKEEEIFRIDHYLGKEMVKNILIMRFGNEFFNATWNRHHIDNVQITFKEPFGTEGRGGYFDEFGIIRDVMQNHLLQVLTLLAMERPISFSAEDIRDEKVRVLRAMDPIQPKDVIIGQYGRSLDGSKPAYKEDDTVPQDSRCPTFCALVAHIKNERWDGVPFIMKAGKALNEQKTEIRIQFKDVTSGIFKDIPRNELVIRVQPNESVYIKMNSKLPGLSMQTVVTELDLTYRRRFSDLKIPEAYESLILDALKGDHSNFVRDDELDASWRMFTPLLHYLDDNKEIIPMEYPYGSRGPSVLDDFTASYGYKFSDAAGYQWPLTHTTPNRL.

NADP(+) contacts are provided by residues 29–36 (GASGDLAK), Arg-63, and Lys-164. D-glucose 6-phosphate is bound by residues Lys-164, 194–198 (HYLGK), Glu-232, and Asp-251. Catalysis depends on His-256, which acts as the Proton acceptor. Lys-347 contacts NADP(+). Lys-350 is a binding site for D-glucose 6-phosphate. Positions 356, 360, and 382 each coordinate NADP(+). Gln-384 is a D-glucose 6-phosphate binding site. NADP(+) contacts are provided by residues 390 to 392 (YIK), 410 to 412 (DLT), and Arg-477.

It belongs to the glucose-6-phosphate dehydrogenase family.

It carries out the reaction D-glucose 6-phosphate + NADP(+) = 6-phospho-D-glucono-1,5-lactone + NADPH + H(+). It functions in the pathway carbohydrate degradation; pentose phosphate pathway; D-ribulose 5-phosphate from D-glucose 6-phosphate (oxidative stage): step 1/3. Catalyzes the rate-limiting step of the oxidative pentose-phosphate pathway, which represents a route for the dissimilation of carbohydrates besides glycolysis. The main function of this enzyme is to provide reducing power (NADPH) and pentose phosphates for fatty acid and nucleic acid synthesis. The sequence is that of Glucose-6-phosphate 1-dehydrogenase (gsdA) from Emericella nidulans (strain FGSC A4 / ATCC 38163 / CBS 112.46 / NRRL 194 / M139) (Aspergillus nidulans).